Here is a 156-residue protein sequence, read N- to C-terminus: Peptide deformylase (156 aa).

Fe cation is bound by residues Cys-90 and His-132. Glu-133 is a catalytic residue. His-136 provides a ligand contact to Fe cation.

It belongs to the polypeptide deformylase family. Requires Fe(2+) as cofactor.

The catalysed reaction is N-terminal N-formyl-L-methionyl-[peptide] + H2O = N-terminal L-methionyl-[peptide] + formate. Removes the formyl group from the N-terminal Met of newly synthesized proteins. Requires at least a dipeptide for an efficient rate of reaction. N-terminal L-methionine is a prerequisite for activity but the enzyme has broad specificity at other positions. The sequence is that of Peptide deformylase from Natranaerobius thermophilus (strain ATCC BAA-1301 / DSM 18059 / JW/NM-WN-LF).